Consider the following 300-residue polypeptide: UPF0761 membrane protein PSHAa0171 (300 aa).

6 consecutive transmembrane segments (helical) span residues 47 to 67 (LLSL…FPGF), 100 to 120 (NANQ…LLLI), 143 to 163 (FAVY…SIAV), 181 to 201 (FSGF…FIML), 215 to 235 (AIPG…GFAL), and 249 to 269 (AVAT…VVLL).

Belongs to the UPF0761 family.

Its subcellular location is the cell inner membrane. In Pseudoalteromonas translucida (strain TAC 125), this protein is UPF0761 membrane protein PSHAa0171.